We begin with the raw amino-acid sequence, 137 residues long: Gonadotropin subunit beta-1 (137 aa).

Residues 1–24 (MYCTHLKTLQLVVMATLWVTPVRA) form the signal peptide. 5 cysteine pairs are disulfide-bonded: Cys-32-Cys-78, Cys-46-Cys-93, Cys-55-Cys-108, Cys-59-Cys-110, and Cys-113-Cys-120. The N-linked (GlcNAc...) asparagine glycan is linked to Asn-36.

The protein belongs to the glycoprotein hormones subunit beta family. As to quaternary structure, heterodimer of an alpha and a beta chain.

The protein localises to the secreted. Its function is as follows. Involved in gametogenesis and steroidogenesis. The sequence is that of Gonadotropin subunit beta-1 (cgba) from Oncorhynchus masou (Cherry salmon).